The chain runs to 446 residues: MHSRPLPTLGRHAARSVLNSPNFFIGNRAYPLKSSVGAKAILYTAGILGGAFAGYYLFNARSAIHEYLLCPILRLATPDAENGHRAGIFCLKWGLAPKLLFDEDDEVLHVNVFGTKMTNPIGCAAGLDKDAEAIDGIMQGGFGYMEIGSVTPLPQPGNPKPRFFRLPQDDAVINRYGFNSSGHDAVYSNLSKRVTSFLKSYFAKDNEIDKLSLYKNKLLAINLGKNKTGDEVKDYLKGVEKFQSHADVLVINVSSPNTPGLRDLQNESKLTDLLSQIVQKRNSLIQNGNVLGAKTHKPPVLVKIAPDLTEPELESIAVAAKKSKVDGIIVSNTTIQRPDSLVTRDEALKSQTGGLSGKPLKPFALKALKTVYKYTKDSELVLVGCGGISSGQDAIEFAKAGATFVQLYTSYAYKGPGLIAHIKDEVTEELKKEGKTWNQIIGEDSK.

The N-terminal 13 residues, 1–13 (MHSRPLPTLGRHA), are a transit peptide targeting the mitochondrion. The chain crosses the membrane as a helical span at residues 40–57 (AILYTAGILGGAFAGYYL). FMN is bound by residues 125 to 129 (AGLDK) and Ser-149. Residue Lys-129 coordinates substrate. Residue 174 to 178 (NRYGF) participates in substrate binding. Positions 222 and 252 each coordinate FMN. Substrate is bound by residues Asn-252 and 252–257 (NVSSPN). The Nucleophile role is filled by Ser-255. FMN-binding residues include Lys-303 and Ser-331. 332–333 (NT) contacts substrate. FMN-binding positions include Gly-357, Gly-387, and 408-409 (YT).

This sequence belongs to the dihydroorotate dehydrogenase family. Type 2 subfamily. Requires FMN as cofactor.

It is found in the mitochondrion inner membrane. It catalyses the reaction (S)-dihydroorotate + a quinone = orotate + a quinol. It participates in pyrimidine metabolism; UMP biosynthesis via de novo pathway; orotate from (S)-dihydroorotate (quinone route): step 1/1. With respect to regulation, the activity is dependent of the presence of oxygen. Its function is as follows. Catalyzes the conversion of dihydroorotate to orotate with quinone as electron acceptor. The protein is Dihydroorotate dehydrogenase (quinone), mitochondrial (URA9) of Lachancea kluyveri (strain ATCC 58438 / CBS 3082 / BCRC 21498 / NBRC 1685 / JCM 7257 / NCYC 543 / NRRL Y-12651) (Yeast).